A 338-amino-acid chain; its full sequence is Palmitoyltransferase ZDHHC15 (338 aa).

The Cytoplasmic portion of the chain corresponds to 1–20 (MLAGCRVALPRGLRCCQRVL). A helical transmembrane segment spans residues 21–41 (SWVPVVIISLVVLWSYYAYVW). Over 42-56 (ELCLVTVTNPAEKAA) the chain is Lumenal. The chain crosses the membrane as a helical span at residues 57-77 (YLLIFHTVFLLFIWTYWKAIF). Over 78 to 172 (TPPKQPTKKF…NNCIGYSNYK (95 aa)) the chain is Cytoplasmic. A DHHC domain is found at 129–179 (RFCDTCQMVKPDRCHHCSVCGMCVLKMDHHCPWVNNCIGYSNYKFFLLFLA). The Zn(2+) site is built by Cys131, Cys134, His144, Cys145, Cys148, Cys151, and His158. Cys159 serves as the catalytic S-palmitoyl cysteine intermediate. Zn(2+) is bound at residue Cys165. A helical membrane pass occupies residues 173-193 (FFLLFLAYAMLYCLYIGCTVF). The Lumenal segment spans residues 194–210 (QYFILYWTDTLSNGRAK). Residues 211 to 234 (FHVLFLLFVALMFFISLMFLFGYH) form a helical membrane-spanning segment. Residues 235–338 (CWLVSLNRTT…TSHITVHIEK (104 aa)) are Cytoplasmic-facing.

This sequence belongs to the DHHC palmitoyltransferase family. Autopalmitoylated (in vitro).

It localises to the golgi apparatus membrane. It is found in the postsynaptic density. The catalysed reaction is L-cysteinyl-[protein] + hexadecanoyl-CoA = S-hexadecanoyl-L-cysteinyl-[protein] + CoA. The enzyme catalyses L-cysteinyl-[protein] + tetradecanoyl-CoA = S-tetradecanoyl-L-cysteinyl-[protein] + CoA. It catalyses the reaction L-cysteinyl-[protein] + octadecanoyl-CoA = S-octadecanoyl-L-cysteinyl-[protein] + CoA. Functionally, palmitoyltransferase that catalyzes the addition of palmitate onto various protein substrates. Has no stringent fatty acid selectivity and in addition to palmitate can also transfer onto target proteins myristate from tetradecanoyl-CoA and stearate from octadecanoyl-CoA. May thereby regulate target proteins association and localization to membranes. In the nervous system, probably catalyzes the palmitoylation of synaptic proteins and is involved in the differentiation of dopaminergic neurons and the development of the diencephalon. This is Palmitoyltransferase ZDHHC15 (zdhhc15) from Xenopus laevis (African clawed frog).